A 155-amino-acid chain; its full sequence is Small ribosomal subunit protein eS19B (155 aa).

Belongs to the eukaryotic ribosomal protein eS19 family.

The polypeptide is Small ribosomal subunit protein eS19B (RpS19b) (Drosophila melanogaster (Fruit fly)).